Consider the following 440-residue polypeptide: Probable cytosolic iron-sulfur protein assembly protein 1 (440 aa).

7 WD repeats span residues 12 to 51, 71 to 110, 148 to 187, 193 to 233, 278 to 317, 326 to 379, and 401 to 440; these read AHAE…SSDG, DHKR…SDDE, GHES…DFEC, EHSQ…WCIF, EEDE…PDSA, AHSR…SPSS, and HGVN…VVRD. Positions 107-116 are enriched in acidic residues; the sequence is SDDEEEEDEG. The interval 107-137 is disordered; that stretch reads SDDEEEEDEGAQGVYKPAGVDSDGDGDGGKE.

The protein belongs to the WD repeat CIA1 family.

Functionally, essential component of the cytosolic iron-sulfur (Fe/S) protein assembly machinery. Required for the maturation of extramitochondrial Fe/S proteins. This is Probable cytosolic iron-sulfur protein assembly protein 1 from Cryptococcus neoformans var. neoformans serotype D (strain B-3501A) (Filobasidiella neoformans).